We begin with the raw amino-acid sequence, 86 residues long: Small muscular protein (86 aa).

The interval Met20 to Pro64 is disordered.

It belongs to the SMPX family.

Its function is as follows. Plays a role in the regulatory network through which muscle cells coordinate their structural and functional states during growth, adaptation, and repair. The protein is Small muscular protein (SMPX) of Bos taurus (Bovine).